We begin with the raw amino-acid sequence, 116 residues long: PTS system N,N'-diacetylchitobiose-specific EIIA component (116 aa).

Positions Glu-15–Lys-113 constitute a PTS EIIA type-3 domain. His-89 serves as the catalytic Tele-phosphohistidine intermediate. A Phosphohistidine; by HPr modification is found at His-89.

As to quaternary structure, forms a complex with ChbB (EIIB). ChbA is a homotrimer. The cofactor is Mg(2+).

It is found in the cytoplasm. The phosphoenolpyruvate-dependent sugar phosphotransferase system (sugar PTS), a major carbohydrate active transport system, catalyzes the phosphorylation of incoming sugar substrates concomitantly with their translocation across the cell membrane. The enzyme II ChbABC PTS system is involved in the transport of the chitin disaccharide N,N'-diacetylchitobiose (GlcNAc2). The sequence is that of PTS system N,N'-diacetylchitobiose-specific EIIA component (chbA) from Escherichia coli O157:H7.